The chain runs to 411 residues: MKPSHKSCEAAPLLPKMPETSTHNAPLNLSFPSVPSYQIGCSSLPEISRSTERALKEGKLPELVYGVKETVATLSQIPVSIFVTGDSGNGMSSFINALRIIGHEEDASAPTGVVRTTQTRAEYSSSHFPNVVLWDLPGLGATAQTVENYIEEMKFSTCDLFIIVASEQFSSNHVKLAKIIQSMGKRFYVIWTKLDRDLSTSVLSEVRLIQNIQENIRENLQKEGVKEVPIFLVSNLDPLLHDFPELRNTLQTDLSNIRCCEPLKTLYVIYEKIIGDKVANWNQIIANGRLKSSLGVRDDDDMGECLKRYRLIFGIDDESLQQIAHGMGTVVMEYKANIKSQDFHTLRRADWKLRLMTCTTVNALFCLFKFLPCLCHCFKRMRHKRMLLLVAKDTKNILKKILMDAVSPPQI.

The tract at residues 1 to 21 is disordered; that stretch reads MKPSHKSCEAAPLLPKMPETS. An IRG-type G domain is found at 77–253; that stretch reads IPVSIFVTGD…PELRNTLQTD (177 aa). Residues 86 to 93, 111 to 115, and 193 to 195 contribute to the GTP site; these read DSGNGMSS, TGVVR, and KLD. Position 204 is a phosphoserine (Ser-204). 234–236 is a GTP binding site; that stretch reads SNL. Lys-272 is covalently cross-linked (Glycyl lysine isopeptide (Lys-Gly) (interchain with G-Cter in ubiquitin)). The tract at residues 352 to 376 is alpha-K amphipathic helix; it reads KLRLMTCTTVNALFCLFKFLPCLCH.

Belongs to the TRAFAC class dynamin-like GTPase superfamily. IRG family. In terms of assembly, interacts with ULK1; promoting the coassembly of ULK1 and BECN1. Interacts with BECN1; enhancing BECN1-interacting partners and influencing the composition of the BECN1 complex. Interacts with ATG16L1. Interacts with NOD2; promoting Irgm 'Lys-63'-linked polyubiquitination, which is required for interactions with the core autophagy factors. Interacts with STX17; promoting STX17 recruitment to autophagosomes. Interacts with ATG8 proteins (GABARAP, GABARAPL1, GABARAPL2, MAP1LC3A, MAP1LC3B and MAP1LC3C); promoting STX17 recruitment to autophagosomes. Interacts with TFEB; promoting association between TFEB and PPP3CB and TFEB dephosphorylation. Interacts with PPP3CB; promoting association between TFEB and PPP3CB and TFEB dephosphorylation. Interacts with NLRP3; preventing NLRP3 inflammasome assembly and promoting SQSTM1/p62-dependent autophagic degradation of NLRP3. Interacts with CGAS; promoting SQSTM1/p62-dependent autophagic degradation of CGAS. Interacts with RIGI/RIG-I; promoting SQSTM1/p62-dependent autophagic degradation of RIGI/RIG-I. Interacts with NOD1; promoting SQSTM1/p62-dependent autophagic degradation of RIGI/RIG-I. Interacts with NOD2; promoting SQSTM1/p62-dependent autophagic degradation of RIGI/RIG-I. Interacts with RIPK2; promoting SQSTM1/p62-dependent autophagic degradation of RIGI/RIG-I. Interacts with PIK3CA. Palmitoylated on C-terminal Cys residues. Palmitoylation, together with the alpha-K amphipathic helix, which binds phosphatidylinositol, mediate binding to membranes. In terms of processing, ubiquitinated via 'Lys-63'-linked polyubiquitination in a NOD2-dependent process. 'Lys-63'-linked polyubiquitination is required for interactions with the core autophagy factors. Ubiquitination at Lys-272 by the DCX(WDR77) complex, also named CLR4(WDR77) complex, in intestinal cells, leading to its degradation by the proteasome.

It localises to the golgi apparatus membrane. The protein resides in the cell membrane. The protein localises to the cytoplasmic vesicle. It is found in the phagosome membrane. Its subcellular location is the autophagosome membrane. It localises to the lysosome membrane. The protein resides in the late endosome membrane. The protein localises to the mitochondrion membrane. It is found in the cell projection. Its subcellular location is the phagocytic cup. It carries out the reaction GTP + H2O = GDP + phosphate + H(+). Its function is as follows. Immunity-related GTPase that plays important roles in innate immunity and inflammatory response. Acts as a dynamin-like protein that binds to intracellular membranes and promotes remodeling and trafficking of those membranes. Required for clearance of acute protozoan and bacterial infections by interacting with autophagy and lysosome regulatory proteins, thereby promoting the fusion of phagosomes with lysosomes for efficient degradation of cargo including microbes. Regulates selective autophagy, including xenophagy and mitophagy, both directly and indirectly. Directly regulates autophagy by acting as a molecular adapter that promotes the coassembly of the core autophagy machinery to mediate antimicrobial defense: Irgm (1) activates AMPK, which in turn phosphorylates ULK1 and BECN1 to induce autophagy, (2) promotes the coassembly of ULK1 and BECN1, enhancing BECN1-interacting partners and (3) influences the composition of the BECN1 complex, by competing with the negative regulators BCL2 and RUBCN, to trigger autophagy. Also activates autophagy by promoting recruitment of STX17 to autophagosomes. In collaboration with ATG8 proteins, regulate lysosomal biogenesis, a fundamental process for any autophagic pathway, by promoting TFEB dephosphorylation. Also modulates autophagy by assisting with autophagosome formation and preventing lysosomal deacidification. Regulates autophagy by affecting mitochondrial fusion and fission. Also involved in M1 macrophage activation for the production of proinflammatory cytokines. While activating autophagy, acts as a key negative regulator of the inflammatory and interferon responses both by (1) promoting mitophagy and (2) mediating autophagy-dependent degradation of effectors of the inflammatory response. Promotes degradation of damaged and IFNG/IFN-gamma-stressed mitochondria via mitophagy, preventing cytosolic release of ligands that activate inflammation. Negatively regulates interferon-signaling in hematopoietic stem cells, preserving hematopoietic stem cell number and function. Promotes expansion of activated CD4(+) T-cells by inhibiting IFNG/IFN-gamma signaling, thereby preventing Ifng-mediated cell death of CD4(+) T-cells. Acts as a suppressor of inflammation by promoting recruitment of inflammation effectors, such as CGAS, RIGI/RIG-I and NLRP3, to autophagosome membranes, leading to their SQSTM1/p62-dependent autophagic degradation. Also directly inhibits assembly of the NLRP3 inflammasome by preventing the association between NLRP3 and PYCARD. Acts as a negative regulator of antiviral innate immune response by suppressing the RIPK2-dependent pro-inflammatory response: mediates recruitment of RIPosomes, composed of RIPK2 and NOD1 or NOD2, to autophagosome membranes, promoting their SQSTM1/p62-dependent autophagic degradation. This chain is Immunity-related GTPase family M protein, found in Rattus norvegicus (Rat).